The chain runs to 195 residues: Pyruvoyl-dependent arginine decarboxylase AaxB (195 aa).

Position 53 is a pyruvic acid (Ser) (Ser-53).

It belongs to the pyruvoyl-dependent arginine decarboxylase family. As to quaternary structure, trimer of an alpha-beta dimer. Requires pyruvate as cofactor.

The protein localises to the cytoplasm. The catalysed reaction is L-arginine + H(+) = agmatine + CO2. Functionally, part of the AaxABC system, catalyzes the decarboxylation of L-arginine. The arginine uptake by the bacterium in the macrophage may be a virulence factor against the host innate immune response. The polypeptide is Pyruvoyl-dependent arginine decarboxylase AaxB (aaxB) (Chlamydia muridarum (strain MoPn / Nigg)).